A 294-amino-acid chain; its full sequence is Non-selective voltage-gated ion channel VDAC2 (294 aa).

At alanine 2 the chain carries N-acetylalanine. ATP-binding residues include lysine 23 and lysine 31. An N6-acetyllysine; alternate modification is found at lysine 31. Lysine 31 carries the N6-succinyllysine; alternate modification. Lysine 31 is covalently cross-linked (Glycyl lysine isopeptide (Lys-Gly) (interchain with G-Cter in ubiquitin); alternate). Transmembrane regions (beta stranded) follow at residues 37–46 and 50–58; these read LVKLDVKTKS and VEFSTSGSS. Glycyl lysine isopeptide (Lys-Gly) (interchain with G-Cter in ubiquitin) cross-links involve residues lysine 64 and lysine 72. The chain crosses the membrane as a beta stranded span at residues 65–75; sequence VTGTLETKYKW. A Phosphotyrosine modification is found at tyrosine 78. The next 3 beta stranded transmembrane spans lie at 80–87, 91–100, and 106–115; these read LTFTEKWN, TLGTEIAIED, and LKLTFDTTFS. Threonine 118 is subject to Phosphothreonine. At lysine 120 the chain carries N6-acetyllysine; alternate. Lysine 120 is covalently cross-linked (Glycyl lysine isopeptide (Lys-Gly) (interchain with G-Cter in ubiquitin); alternate). Residues lysine 121 and lysine 124 each participate in a glycyl lysine isopeptide (Lys-Gly) (interchain with G-Cter in ubiquitin) cross-link. The next 4 membrane-spanning stretches (beta stranded) occupy residues 122–131, 134–141, 148–156, and 161–169; these read SGKIKSSYKR, INLGCDVD, AIHGSAVFG, and LAGYQMTFD. A Glycyl lysine isopeptide (Lys-Gly) (interchain with G-Cter in ubiquitin) cross-link involves residue lysine 172. Beta stranded transmembrane passes span 174–186, 189–196, 200–209, 213–222, 229–238, and 242–249; these read KLTR…GYRT, FQLHTNVN, EFGGSIYQKV, LDTSVNLAWT, RFGIAAKYQL, and ASISAKVN. Position 251 is a phosphoserine (serine 251). NAD(+) is bound by residues 253-255 and 271-275; these read LIG and SALVD. 2 beta stranded membrane passes run 253–262 and 265–274; these read LIGVGYTQTL and GVKLTLSALV. Lysine 277 is subject to N6-acetyllysine; alternate. A Glycyl lysine isopeptide (Lys-Gly) (interchain with G-Cter in ubiquitin); alternate cross-link involves residue lysine 277. The chain crosses the membrane as a beta stranded span at residues 284–293; sequence HKVGLALELE. Residue lysine 285 forms a Glycyl lysine isopeptide (Lys-Gly) (interchain with G-Cter in ubiquitin) linkage.

Belongs to the eukaryotic mitochondrial porin family. Monomer, homodimer and higher order oligomers; formation of higher order structures is necessary for scramblase activity. Interacts with ARMC12 in a TBC1D21-dependent manner. Interacts with KLC3. Interacts with SPATA33. Interacts with PPP3CC in a SPATA33-dependent manner. Post-translationally, ubiquitinated by PRKN during mitophagy, leading to its degradation and enhancement of mitophagy. Deubiquitinated by USP30. Expressed in erythrocytes (at protein level). Expressed in all tissues examined.

The protein resides in the mitochondrion outer membrane. It is found in the membrane. It catalyses the reaction chloride(in) = chloride(out). The catalysed reaction is K(+)(in) = K(+)(out). It carries out the reaction a 1,2-diacyl-sn-glycero-3-phospho-L-serine(in) = a 1,2-diacyl-sn-glycero-3-phospho-L-serine(out). The enzyme catalyses a 1,2-diacyl-sn-glycero-3-phosphocholine(in) = a 1,2-diacyl-sn-glycero-3-phosphocholine(out). It catalyses the reaction a 1,2-diacyl-sn-glycero-3-phospho-(1D-myo-inositol)(in) = a 1,2-diacyl-sn-glycero-3-phospho-(1D-myo-inositol)(out). Non-selective voltage-gated ion channel that mediates the transport of anions and cations through the mitochondrion outer membrane and plasma membrane. The channel adopts an open conformation at zero mV and a closed conformation at both positive and negative potentials. There are two populations of channels; the main that functions in a lower open-state conductance with lower ion selectivity, that switch, in a voltage-dependent manner, from the open to a low-conducting 'closed' state and the other that has a normal ion selectivity in the typical high conductance, 'open' state. Binds various lipids, including the sphingolipid ceramide, the phospholipid phosphatidylcholine, and the sterols cholesterol and oxysterol. Binding of ceramide promotes the mitochondrial outer membrane permeabilization (MOMP) apoptotic pathway. Functionally, catalyzes the scrambling of phospholipids across the outer mitochondrial membrane; the mechanism is unrelated to channel activity and is capable of translocating both anionic and zwitterionic phospholipids. The sequence is that of Non-selective voltage-gated ion channel VDAC2 from Homo sapiens (Human).